We begin with the raw amino-acid sequence, 87 residues long: Large ribosomal subunit protein bL31B (87 aa).

It belongs to the bacterial ribosomal protein bL31 family. Type B subfamily. As to quaternary structure, part of the 50S ribosomal subunit.

The sequence is that of Large ribosomal subunit protein bL31B from Pseudomonas aeruginosa (strain LESB58).